The chain runs to 192 residues: MITITDAAQAHFAKLLANQEPNTQIRVFVINPGTPNAECGVSYCPPDAVEPNDTEIKFEKLSAYVDDISAPFLEDAEIDFVTDQLGSQLTLKAPNAKMRKVADDAPLIERVEYVLQSQINPQLASHGGRVSLMEITEDGYAILQFGGGCNGCSMIDVTLKDGIEKELLNLFPEELKGVKDLTEHQRGDHSYY.

[4Fe-4S] cluster is bound by residues cysteine 149 and cysteine 152.

Belongs to the NfuA family. As to quaternary structure, homodimer. [4Fe-4S] cluster is required as a cofactor.

Involved in iron-sulfur cluster biogenesis. Binds a 4Fe-4S cluster, can transfer this cluster to apoproteins, and thereby intervenes in the maturation of Fe/S proteins. Could also act as a scaffold/chaperone for damaged Fe/S proteins. The sequence is that of Fe/S biogenesis protein NfuA from Proteus mirabilis (strain HI4320).